The chain runs to 184 residues: Probable N-acetyltransferase san (184 aa).

The N-acetyltransferase domain occupies 6–155 (IELGDVTPHN…DAHVLQKTLR (150 aa)). Tyrosine 31 contributes to the substrate binding site. Residue lysine 47 is modified to N6-acetyllysine; by autocatalysis. The active site involves tyrosine 73. Methionine 75 provides a ligand contact to substrate. 77–90 (LGCLSPYRRLGIGT) serves as a coordination point for acetyl-CoA. The active site involves histidine 112. A CoA-binding site is contributed by 117–126 (NNGAIEFYKK). The interval 138-141 (YYKR) is substrate. Residues 157 to 174 (TAPNSNSTATSTTANSNS) show a composition bias toward low complexity. Positions 157 to 176 (TAPNSNSTATSTTANSNSRS) are disordered.

The protein belongs to the acetyltransferase family. Component of an acetyltransferase complex, at least composed of san, Ard1 and Nat1. Post-translationally, autoacetylated.

It is found in the cytoplasm. It carries out the reaction N-terminal L-methionyl-L-alanyl-[protein] + acetyl-CoA = N-terminal N(alpha)-acetyl-L-methionyl-L-alanyl-[protein] + CoA + H(+). The catalysed reaction is N-terminal L-methionyl-L-seryl-[protein] + acetyl-CoA = N-terminal N(alpha)-acetyl-L-methionyl-L-seryl-[protein] + CoA + H(+). It catalyses the reaction N-terminal L-methionyl-L-valyl-[protein] + acetyl-CoA = N-terminal N(alpha)-acetyl-L-methionyl-L-valyl-[protein] + CoA + H(+). The enzyme catalyses N-terminal L-methionyl-L-threonyl-[protein] + acetyl-CoA = N-terminal N(alpha)-acetyl-L-methionyl-L-threonyl-[protein] + CoA + H(+). It carries out the reaction N-terminal L-methionyl-L-lysyl-[protein] + acetyl-CoA = N-terminal N(alpha)-acetyl-L-methionyl-L-lysyl-[protein] + CoA + H(+). The catalysed reaction is N-terminal L-methionyl-L-leucyl-[protein] + acetyl-CoA = N-terminal N(alpha)-acetyl-L-methionyl-L-leucyl-[protein] + CoA + H(+). It catalyses the reaction N-terminal L-methionyl-L-phenylalanyl-[protein] + acetyl-CoA = N-terminal N(alpha)-acetyl-L-methionyl-L-phenylalanyl-[protein] + CoA + H(+). The enzyme catalyses N-terminal L-methionyl-L-tyrosyl-[protein] + acetyl-CoA = N-terminal N(alpha)-acetyl-L-methionyl-L-tyrosyl-[protein] + CoA + H(+). Its function is as follows. N-alpha-acetyltransferase that acetylates the N-terminus of proteins that retain their initiating methionine. Has a broad substrate specificity: able to acetylate the initiator methionine of most peptides. Also displays N-epsilon-acetyltransferase activity by mediating acetylation of the side chain of specific lysines on proteins. Autoacetylates. Required for the establishment of sister chromatid cohesion and couple the processes of cohesion and DNA replication to ensure that only sister chromatids become paired together. Required for the interaction between Scc1/vtd and SMC3, possibly by mediating N-terminal acetylation of Scc1/vtd. In terms of biological role, (Microbial infection) Required for optimal replication of E.chaffeensis in the immune tissues, hemocytes, and fat body. This chain is Probable N-acetyltransferase san (san), found in Drosophila melanogaster (Fruit fly).